The following is a 547-amino-acid chain: CTP synthase (547 aa).

Residues 1-265 (MARFVFITGG…DQAVLDAFSI (265 aa)) form an amidoligase domain region. Residue Ser13 coordinates CTP. Residue Ser13 participates in UTP binding. ATP is bound by residues 14-19 (SLGKGL) and Asp71. Residues Asp71 and Glu139 each coordinate Mg(2+). CTP contacts are provided by residues 146-148 (DIE), 186-191 (KTKPTQ), and Lys222. Residues 186–191 (KTKPTQ) and Lys222 contribute to the UTP site. One can recognise a Glutamine amidotransferase type-1 domain in the interval 291 to 546 (NVAIVGKYTQ…VRAAKEVSRL (256 aa)). L-glutamine is bound at residue Gly353. The Nucleophile; for glutamine hydrolysis role is filled by Cys380. L-glutamine-binding positions include 381–384 (LGMQ), Glu404, and Arg474. Residues His519 and Glu521 contribute to the active site.

Belongs to the CTP synthase family. Homotetramer.

It carries out the reaction UTP + L-glutamine + ATP + H2O = CTP + L-glutamate + ADP + phosphate + 2 H(+). The enzyme catalyses L-glutamine + H2O = L-glutamate + NH4(+). It catalyses the reaction UTP + NH4(+) + ATP = CTP + ADP + phosphate + 2 H(+). Its pathway is pyrimidine metabolism; CTP biosynthesis via de novo pathway; CTP from UDP: step 2/2. With respect to regulation, allosterically activated by GTP, when glutamine is the substrate; GTP has no effect on the reaction when ammonia is the substrate. The allosteric effector GTP functions by stabilizing the protein conformation that binds the tetrahedral intermediate(s) formed during glutamine hydrolysis. Inhibited by the product CTP, via allosteric rather than competitive inhibition. Functionally, catalyzes the ATP-dependent amination of UTP to CTP with either L-glutamine or ammonia as the source of nitrogen. Regulates intracellular CTP levels through interactions with the four ribonucleotide triphosphates. In Dinoroseobacter shibae (strain DSM 16493 / NCIMB 14021 / DFL 12), this protein is CTP synthase.